We begin with the raw amino-acid sequence, 86 residues long: Large ribosomal subunit protein bL27 (86 aa).

Belongs to the bacterial ribosomal protein bL27 family.

This is Large ribosomal subunit protein bL27 from Koribacter versatilis (strain Ellin345).